Consider the following 540-residue polypeptide: Cytosolic carboxypeptidase 6 (540 aa).

The Peptidase M14 domain occupies 167–438 (YPYTYTRFQH…NVARTFLDYY (272 aa)). Zn(2+)-binding residues include H230, E233, and H328. E401 acts as the Proton donor/acceptor in catalysis.

It belongs to the peptidase M14 family. In terms of assembly, interacts with MYLK. Requires Zn(2+) as cofactor. Widely expressed. Expressed abundantly in testis, pituitary and brain and to a lower extent in eye, stomach, adrenal and kidney. In brain, expressed at low level in cerebellum as compared to cortex.

The protein resides in the cytoplasm. The protein localises to the cytosol. It is found in the cytoskeleton. It localises to the microtubule organizing center. Its subcellular location is the centrosome. The protein resides in the centriole. The protein localises to the golgi apparatus. It is found in the cilium basal body. It catalyses the reaction (L-glutamyl)(n+1)-gamma-L-glutamyl-L-glutamyl-[protein] + H2O = (L-glutamyl)(n)-gamma-L-glutamyl-L-glutamyl-[protein] + L-glutamate. The enzyme catalyses C-terminal L-alpha-aminoacyl-L-glutamyl-L-glutamyl-[tubulin] + H2O = C-terminal L-alpha-aminoacyl-L-glutamyl-[tubulin] + L-glutamate. Metallocarboxypeptidase that mediates protein deglutamylation of tubulin and non-tubulin target proteins. Catalyzes the removal of polyglutamate side chains present on the gamma-carboxyl group of glutamate residues within the C-terminal tail of tubulin protein. Specifically cleaves tubulin long-side-chains, while it is not able to remove the branching point glutamate. Also catalyzes the removal of polyglutamate residues from the carboxy-terminus of non-tubulin proteins such as MYLK. Mediates the deglutamylation of nucleotidyltransferase CGAS, leading to CGAS antiviral defense response activation. Involved in KLF4 deglutamylation which promotes KLF4 proteasome-mediated degradation, thereby negatively regulating cell pluripotency maintenance and embryogenesis. The sequence is that of Cytosolic carboxypeptidase 6 from Mus musculus (Mouse).